Here is a 2042-residue protein sequence, read N- to C-terminus: Protein mini spindles (2042 aa).

2 TOG regions span residues 1–229 and 267–505; these read MAED…VEPS and MDLL…KVAG. The segment at 1 to 505 is binds tubulin; sequence MAEDTEYKKL…KAEIKIKVAG (505 aa). Promotes microtubule polymerization regions lie at residues 1-516 and 581-1080; these read MAED…ASAP and TPEE…EKAR. HEAT repeat units lie at residues 120 to 157, 160 to 197, 270 to 311, 315 to 353, 357 to 394, 396 to 433, and 440 to 478; these read EKQEAVVEELVKGMEAKNPKIVSACVAATTLALREFGH, IGVKPLIKKLAPLMSDRDKTVRDEGKQLAVEIYRWIGA, LDPV…DHPK, GEYGALVSALKKVITKDSNVVLVAMAGKCLALLAKGLAK, NYASACVPSLLEKFKEKKPNVVTALREAIDAIYASTSL, AQQESIVESLSNKNPSVKSETALFIARALTRTQPTALN, and LTTSLVKTLNEPDPTVRDSSAEALGTLIKLMGDKAVTPL. Residues 498–821 are association with microtubule lattice; sequence EIKIKVAGPK…PKPVRGVQRS (324 aa). A disordered region spans residues 506-572; the sequence is PKKETRPASA…PTAALKAGGK (67 aa). The segment covering 513–531 has biased composition (low complexity); it reads ASAPTAKAAAPAKTVAGSV. A TOG 3 region spans residues 581 to 814; sequence TPEELQEKSE…KNVGEKPPKP (234 aa). HEAT repeat units lie at residues 587-624, 625-662, 672-710, and 745-782; these read EKSEEILPAEILNGLVDSNWKNRLAAVEQLLGEISGFD, AKQAGISQILIRTISGRKPGLKEMNFQVLKFKLDIIRS, TTVDLVINEIIEKLADAKNGAAAADVLSAFAEATKLEYV, and LQPKTLIEDVRKGVQSTNPTVRASAIQMVGTMSMYMGK. The disordered stretch occupies residues 804 to 849; that stretch reads DKNVGEKPPKPVRGVQRSSGGTAGNSPDNEDDDGGAAGEEEPINMA. The segment covering 819–830 has biased composition (polar residues); the sequence is QRSSGGTAGNSP. Over residues 831-845 the composition is skewed to acidic residues; that stretch reads DNEDDDGGAAGEEEP. 2 TOG regions span residues 849–1087 and 1179–1415; these read ADLL…PVKP and TELL…KPTP. 4 HEAT repeats span residues 856 to 893, 896 to 933, 937 to 974, and 1017 to 1054; these read DIAPQITEALLKEMSDKDWKTRNEGLTKLQAIISEARL, PSIGDLAPALAHRLVDSNAKIAQTTLAICEQLATAMGA, NHVRNLFPGFLHALGDNKSFVRAAALNCINSFGEKGGY, and EDIHSMVPHLYAHICDRNADVRKNANEAVLGIMIHLGF. The segment at 1083-1140 is disordered; it reads LPVKPLPKGKHQAPIPEEPKLKTVRGGGAGGAPGIQKSATARVAGGQDKQVPARKKDE. An association with microtubule lattice region spans residues 1099 to 1428; it reads EEPKLKTVRG…VDVPAPQRHD (330 aa). 4 HEAT repeats span residues 1205–1242, 1272–1309, 1311–1344, and 1346–1383; these read RYHLKVIEQLSEDLAGNSKALVCNLDLILKWLTLRFYD, NEGSSFVPHLLLKIGDPKDAVRNGVRRVLRQVILVFPF, KVFGYVMEGLKSKNARQRTECLDELTFLIESYGM, and ICPQSAVREIARQISDRDNSVRNAALNCIVQVFFLSGE. Disordered stretches follow at residues 1407–1455 and 1940–1959; these read AKKT…TFDQ and NAGSTQDNRTDVNYQNNGPD. Positions 1940–1957 are enriched in polar residues; that stretch reads NAGSTQDNRTDVNYQNNG.

Belongs to the TOG/XMAP215 family. Interacts with tacc, dgt6. Interacts with mv. Interacts with Patronin.

The protein localises to the cytoplasm. Its subcellular location is the cytoskeleton. It localises to the microtubule organizing center. The protein resides in the centrosome. It is found in the spindle. The protein localises to the perinuclear region. Functionally, binds to the plus end of microtubules and regulates microtubule dynamics and microtubule organization. Function in neurons is essential for adult survival, and is important for climbing behavior and activity. Promotes cytoplasmic microtubule nucleation and elongation. May act as a microtubule antipause factor that rapidly catalyzes the transition from pause to either growth or shrinkage. Involved in mitotic spindle elongation. Involved in the establishment of cell polarity and mitotic spindle orientation in neuroblasts. Required for maintaining the bipolarity of acentrosomal meiotic spindles; the function is dependent on tacc and involves ncd. Involved in oocyte microtubule cytoskeleton organization and bicoid mRNA localization. Seems to be involved in elongation of kinetochore-derived microtubule fibers. In fat body cells, essential component of perinuclear non-centrosomal microtubule-organizing centers (ncMTOCs) which function to accommodate the organization of microtubule (MT) networks to control nuclear positioning and dynein motor-based retrograde endosomal trafficking. Within the ncMTOCs, Msp300 and shot anchors the ncMTOC at the nuclear surface and recruits the MT minus-end regulators Patronin and Nin for assembly, anchoring and/or stabilization of circumferential and radial MTs at the ncMTOCs. Patronin, and perhaps Nin, then recruits msps to the ncMTOC where it is required for the gamma-tubulin-independent elongation and assembly of radial MTs. The polypeptide is Protein mini spindles (msps) (Drosophila melanogaster (Fruit fly)).